A 351-amino-acid chain; its full sequence is GTP 3',8-cyclase (351 aa).

The Radical SAM core domain occupies 29–254 (RFGRVARDLR…EHGREDPSAP (226 aa)). Arg-38 serves as a coordination point for GTP. Residues Cys-45 and Cys-49 each contribute to the [4Fe-4S] cluster site. Residue Tyr-51 participates in S-adenosyl-L-methionine binding. Residue Cys-52 participates in [4Fe-4S] cluster binding. Residue Arg-89 participates in GTP binding. Position 93 (Gly-93) interacts with S-adenosyl-L-methionine. Residue Thr-120 participates in GTP binding. Ser-144 contributes to the S-adenosyl-L-methionine binding site. Residue Lys-181 coordinates GTP. Met-214 contacts S-adenosyl-L-methionine. [4Fe-4S] cluster-binding residues include Cys-278 and Cys-281. 283-285 (RTR) lines the GTP pocket. [4Fe-4S] cluster is bound at residue Cys-295.

The protein belongs to the radical SAM superfamily. MoaA family. Monomer and homodimer. [4Fe-4S] cluster is required as a cofactor.

The enzyme catalyses GTP + AH2 + S-adenosyl-L-methionine = (8S)-3',8-cyclo-7,8-dihydroguanosine 5'-triphosphate + 5'-deoxyadenosine + L-methionine + A + H(+). It participates in cofactor biosynthesis; molybdopterin biosynthesis. Functionally, catalyzes the cyclization of GTP to (8S)-3',8-cyclo-7,8-dihydroguanosine 5'-triphosphate. This is GTP 3',8-cyclase from Rhodococcus opacus (strain B4).